The primary structure comprises 594 residues: ATPase family AAA domain-containing protein 3 (594 aa).

The disordered stretch occupies residues 1 to 50 (MSWLFGLNKGQQGPPSVPGFPEPPSPPGGSGDGGDKNKPKDKWSNFDPTG). Over 1–242 (MSWLFGLNKG…FRAFISDWDK (242 aa)) the chain is Mitochondrial intermembrane. Residues 15 to 27 (PSVPGFPEPPSPP) are compositionally biased toward pro residues. The span at 33-44 (GGDKNKPKDKWS) shows a compositional bias: basic and acidic residues. A coiled-coil region spans residues 51–213 (LERAAKAARE…RENIRLKAAE (163 aa)). The helical transmembrane segment at 243–260 (VTATVAGLSLLAVGIYTA) threads the bilayer. Residues 261–594 (KNATGVAGRY…LQPLLEGTPV (334 aa)) are Mitochondrial matrix-facing. 348–355 (GPPGTGKT) provides a ligand contact to ATP. The span at 571–581 (EGKENAAKESG) shows a compositional bias: basic and acidic residues. A disordered region spans residues 571–594 (EGKENAAKESGKNPLQPLLEGTPV).

It belongs to the AAA ATPase family.

The protein resides in the mitochondrion inner membrane. Its subcellular location is the mitochondrion matrix. It is found in the mitochondrion nucleoid. Functionally, essential for mitochondrial network organization, mitochondrial metabolism and cell growth at organism and cellular level. May play an important role in mitochondrial protein synthesis. May also participate in mitochondrial DNA replication. May bind to mitochondrial DNA D-loops and contribute to nucleoid stability. Required for enhanced channeling of cholesterol for hormone-dependent steroidogenesis. This chain is ATPase family AAA domain-containing protein 3 (atad3), found in Xenopus tropicalis (Western clawed frog).